The primary structure comprises 196 residues: Probable malonic semialdehyde reductase RutE (196 aa).

It belongs to the nitroreductase family. HadB/RutE subfamily. FMN serves as cofactor.

The catalysed reaction is 3-hydroxypropanoate + NADP(+) = 3-oxopropanoate + NADPH + H(+). In terms of biological role, may reduce toxic product malonic semialdehyde to 3-hydroxypropionic acid, which is excreted. This chain is Probable malonic semialdehyde reductase RutE, found in Escherichia coli (strain K12 / MC4100 / BW2952).